A 301-amino-acid chain; its full sequence is Sulfate adenylyltransferase subunit 2 (301 aa).

Belongs to the PAPS reductase family. CysD subfamily. Heterodimer composed of CysD, the smaller subunit, and CysN.

It catalyses the reaction sulfate + ATP + H(+) = adenosine 5'-phosphosulfate + diphosphate. It functions in the pathway sulfur metabolism; hydrogen sulfide biosynthesis; sulfite from sulfate: step 1/3. Functionally, with CysN forms the ATP sulfurylase (ATPS) that catalyzes the adenylation of sulfate producing adenosine 5'-phosphosulfate (APS) and diphosphate, the first enzymatic step in sulfur assimilation pathway. APS synthesis involves the formation of a high-energy phosphoric-sulfuric acid anhydride bond driven by GTP hydrolysis by CysN coupled to ATP hydrolysis by CysD. This is Sulfate adenylyltransferase subunit 2 from Geobacter metallireducens (strain ATCC 53774 / DSM 7210 / GS-15).